We begin with the raw amino-acid sequence, 261 residues long: Chanoclavine-I dehydrogenase ifgE (261 aa).

The signal sequence occupies residues 1–20 (MASVKSRVFAITGGASGIGA). Positions 18, 48, 66, 132, 166, 170, and 201 each coordinate NADP(+). Catalysis depends on Y166, which acts as the Proton acceptor. The active-site Lowers pKa of active site Tyr is the K170.

Belongs to the short-chain dehydrogenases/reductases (SDR) family.

It functions in the pathway alkaloid biosynthesis; ergot alkaloid biosynthesis. Functionally, chanoclavine-I dehydrogenase; part of the gene cluster that mediates the biosynthesis of isofumigaclavines, fungal ergot alkaloids. The tryptophan dimethylallyltransferase ifgA catalyzes the first step of ergot alkaloid biosynthesis by condensing dimethylallyl diphosphate (DMAP) and tryptophan to form 4-dimethylallyl-L-tryptophan. The second step is catalyzed by the methyltransferase ifgB that methylates 4-dimethylallyl-L-tryptophan in the presence of S-adenosyl-L-methionine, resulting in the formation of N-methyl-dimethylallyl-L-tryptophan. The catalase ifgD and the FAD-dependent oxidoreductase ifgC then transform N-methyl-dimethylallyl-L-tryptophan to chanoclavine-I which is further oxidized by ifgE in the presence of NAD(+), resulting in the formation of chanoclavine-I aldehyde. The chanoclavine-I aldehyde reductases ifgG and/or fgaOx3 reduce chanoclavine-I aldehyde to dihydrochanoclavine-I aldehyde that spontaneously dehydrates to form 6,8-dimethyl-6,7-didehydroergoline. The festuclavine dehydrogenases ifgF1 and/or ifgF2 then catalyze the reduction of 6,8-dimethyl-6,7-didehydroergoline to form festuclavine. Hydrolysis of festuclavine by a yet undetermined cytochrome P450 monooxygenase (called ifgH) then leads to the formation of isofumigaclavine B which is in turn acetylated by ifgI to isofumigaclavine A. Penicillium roqueforti has interestingly at least two sets of genes for the consumption of chanoclavine-I aldehyde on three different loci, the OYEs ifgG/fgaOx3 and the festuclavine synthase homologs ifgF1/ifgF2. The reason for the duplication of these genes is unclear, probably to ensure the conversion of chanoclavine-I aldehyde by differential gene expression under various environmental conditions. In Penicillium roqueforti (strain FM164), this protein is Chanoclavine-I dehydrogenase ifgE.